The sequence spans 200 residues: ATP-dependent Clp protease proteolytic subunit (200 aa).

S99 functions as the Nucleophile in the catalytic mechanism. H124 is an active-site residue.

The protein belongs to the peptidase S14 family. Fourteen ClpP subunits assemble into 2 heptameric rings which stack back to back to give a disk-like structure with a central cavity, resembling the structure of eukaryotic proteasomes.

It localises to the cytoplasm. The catalysed reaction is Hydrolysis of proteins to small peptides in the presence of ATP and magnesium. alpha-casein is the usual test substrate. In the absence of ATP, only oligopeptides shorter than five residues are hydrolyzed (such as succinyl-Leu-Tyr-|-NHMec, and Leu-Tyr-Leu-|-Tyr-Trp, in which cleavage of the -Tyr-|-Leu- and -Tyr-|-Trp bonds also occurs).. Its function is as follows. Cleaves peptides in various proteins in a process that requires ATP hydrolysis. Has a chymotrypsin-like activity. Plays a major role in the degradation of misfolded proteins. The sequence is that of ATP-dependent Clp protease proteolytic subunit from Syntrophomonas wolfei subsp. wolfei (strain DSM 2245B / Goettingen).